Reading from the N-terminus, the 200-residue chain is Lipopolysaccharide core heptose(II)-phosphate phosphatase (200 aa).

The signal sequence occupies residues 1–25; it reads MLAFCRSSLKSKKYFIILLALAAIA.

This sequence belongs to the phosphoglycerate mutase family. Ais subfamily.

The protein resides in the periplasm. It participates in bacterial outer membrane biogenesis; lipopolysaccharide metabolism. Functionally, catalyzes the dephosphorylation of heptose(II) of the outer membrane lipopolysaccharide core. The polypeptide is Lipopolysaccharide core heptose(II)-phosphate phosphatase (Escherichia coli O157:H7 (strain EC4115 / EHEC)).